The following is a 115-amino-acid chain: Large ribosomal subunit protein bL19 (115 aa).

This sequence belongs to the bacterial ribosomal protein bL19 family.

Its function is as follows. This protein is located at the 30S-50S ribosomal subunit interface and may play a role in the structure and function of the aminoacyl-tRNA binding site. This chain is Large ribosomal subunit protein bL19, found in Oleidesulfovibrio alaskensis (strain ATCC BAA-1058 / DSM 17464 / G20) (Desulfovibrio alaskensis).